The chain runs to 238 residues: Pyridoxine 5'-phosphate synthase (238 aa).

Position 9 (Asn-9) interacts with 3-amino-2-oxopropyl phosphate. 1-deoxy-D-xylulose 5-phosphate is bound at residue 11–12 (DH). Residue Arg-20 coordinates 3-amino-2-oxopropyl phosphate. The active-site Proton acceptor is His-45. Residues Arg-47 and His-52 each coordinate 1-deoxy-D-xylulose 5-phosphate. Glu-72 serves as the catalytic Proton acceptor. Residue Thr-102 coordinates 1-deoxy-D-xylulose 5-phosphate. His-189 (proton donor) is an active-site residue. 3-amino-2-oxopropyl phosphate is bound by residues Gly-190 and 211–212 (GH).

This sequence belongs to the PNP synthase family. As to quaternary structure, homooctamer; tetramer of dimers.

The protein localises to the cytoplasm. It catalyses the reaction 3-amino-2-oxopropyl phosphate + 1-deoxy-D-xylulose 5-phosphate = pyridoxine 5'-phosphate + phosphate + 2 H2O + H(+). Its pathway is cofactor biosynthesis; pyridoxine 5'-phosphate biosynthesis; pyridoxine 5'-phosphate from D-erythrose 4-phosphate: step 5/5. Its function is as follows. Catalyzes the complicated ring closure reaction between the two acyclic compounds 1-deoxy-D-xylulose-5-phosphate (DXP) and 3-amino-2-oxopropyl phosphate (1-amino-acetone-3-phosphate or AAP) to form pyridoxine 5'-phosphate (PNP) and inorganic phosphate. The polypeptide is Pyridoxine 5'-phosphate synthase (Ehrlichia ruminantium (strain Welgevonden)).